A 276-amino-acid polypeptide reads, in one-letter code: Rhomboid protease GlpG (276 aa).

The next 6 membrane-spanning stretches (helical) occupy residues 94–114 (GPFT…MNVV), 142–162 (ALMH…WYLG), 169–189 (LGSG…GYVQ), 192–212 (FSGP…GYAW), 229–249 (LITF…GMSI), and 250–270 (ANGA…ADTL). Catalysis depends on Ser-201, which acts as the Nucleophile. The active site involves His-254.

The protein belongs to the peptidase S54 family.

Its subcellular location is the cell inner membrane. The enzyme catalyses Cleaves type-1 transmembrane domains using a catalytic dyad composed of serine and histidine that are contributed by different transmembrane domains.. In terms of biological role, rhomboid-type serine protease that catalyzes intramembrane proteolysis. The protein is Rhomboid protease GlpG of Enterobacter sp. (strain 638).